We begin with the raw amino-acid sequence, 274 residues long: Diaminopimelate epimerase (274 aa).

Residues asparagine 11, glutamine 44, and asparagine 64 each contribute to the substrate site. Cysteine 73 acts as the Proton donor in catalysis. Substrate contacts are provided by residues 74 to 75 (GN), asparagine 157, asparagine 190, and 208 to 209 (ER). Residue cysteine 217 is the Proton acceptor of the active site. 218–219 (GS) contributes to the substrate binding site.

The protein belongs to the diaminopimelate epimerase family. Homodimer.

It is found in the cytoplasm. It carries out the reaction (2S,6S)-2,6-diaminopimelate = meso-2,6-diaminopimelate. It participates in amino-acid biosynthesis; L-lysine biosynthesis via DAP pathway; DL-2,6-diaminopimelate from LL-2,6-diaminopimelate: step 1/1. In terms of biological role, catalyzes the stereoinversion of LL-2,6-diaminopimelate (L,L-DAP) to meso-diaminopimelate (meso-DAP), a precursor of L-lysine and an essential component of the bacterial peptidoglycan. This chain is Diaminopimelate epimerase, found in Escherichia coli O6:H1 (strain CFT073 / ATCC 700928 / UPEC).